The primary structure comprises 500 residues: Intracellular exo-alpha-(1-&gt;5)-L-arabinofuranosidase 1 (500 aa).

The alpha-L-arabinofuranose site is built by E27, N72, and N172. Residue E173 is the Proton donor/acceptor of the active site. Alpha-L-arabinofuranose is bound by residues Y244, E292, and Q349. E292 acts as the Nucleophile in catalysis.

Belongs to the glycosyl hydrolase 51 family. As to quaternary structure, homohexamer; trimer of dimers.

Its subcellular location is the cytoplasm. The catalysed reaction is Hydrolysis of terminal non-reducing alpha-L-arabinofuranoside residues in alpha-L-arabinosides.. It catalyses the reaction (20S)-ginsenoside Rc + H2O = L-arabinofuranose + (20S)-ginsenoside Rd. Its pathway is glycan metabolism; L-arabinan degradation. At a concentration of 5 mM, K(+), Cu(2+) and Ni(2+) exhibit inhibitory effects on the activity. Additionally, the chemical reagent SDS also displays a certain degree of inhibition. Enzymatic activity is largely unaffected by product feedback inhibition. Functionally, involved in the degradation of arabinan and is a key enzyme in the complete degradation of the plant cell wall. Catalyzes the cleavage of terminal alpha-(1-&gt;5)-arabinofuranosyl bonds in different hemicellulosic homopolysaccharides (branched and debranched arabinans). It acts preferentially on arabinotriose, arabinobiose and linear alpha-(1-&gt;5)-L-arabinan, and is much less effective on branched sugar beet arabinan. When expressed in E.coli, the recombinant enyzme can hydrolyze, with relatively low catalytic efficiency, the terminal alpha-L-arabinofuranoside at the C20 position of ginsenoside Rc to produce ginsenoside Rd, a rare ginsenoside that exhibits diverse and powerful pharmacological activities. The chain is Intracellular exo-alpha-(1-&gt;5)-L-arabinofuranosidase 1 from Bacillus subtilis (strain 168).